We begin with the raw amino-acid sequence, 348 residues long: MSESFQNKAFKTKIVFDEAKPTDSDAELTAQVQFAESNTFLPEVKADDDIEEQLSHTLASKTKKRSSWFKGLLIAGAAMTGWQTVDYVVSAYQTGDWLALGWSVIVAGIATMGITALGRELFKLRRLKQRQTEREQAQVLLDADGIGQGKAFCMKLAKLSDIRDEHAGYDRWVQSLAATHNDREVLELYDQMVLSHQDRLSRQLVAKYSSEAAVMVAMSPLAVADMLLVAWRNFKLIEQVSVVYGVELGYWSRIKLVKLVLANMAFAGATEVIADTGMDMLSMDLAGRVSTRVAQGVGVGLLTGRLGLKAITLMRPLPWQPDQQPKLSEIRRDLLLKLTHKNESSKNN.

The next 3 helical transmembrane spans lie at Gly71–Ala91, Trp97–Leu117, and Glu211–Trp231.

It belongs to the UPF0283 family.

The protein resides in the cell inner membrane. This Photobacterium profundum (strain SS9) protein is UPF0283 membrane protein PBPRA2435.